Reading from the N-terminus, the 246-residue chain is tRNA (guanine-N(1)-)-methyltransferase (246 aa).

Residues glycine 112 and 131–136 contribute to the S-adenosyl-L-methionine site; that span reads IGDYVL.

It belongs to the RNA methyltransferase TrmD family. Homodimer.

It is found in the cytoplasm. The enzyme catalyses guanosine(37) in tRNA + S-adenosyl-L-methionine = N(1)-methylguanosine(37) in tRNA + S-adenosyl-L-homocysteine + H(+). Its function is as follows. Specifically methylates guanosine-37 in various tRNAs. This chain is tRNA (guanine-N(1)-)-methyltransferase, found in Thermosipho melanesiensis (strain DSM 12029 / CIP 104789 / BI429).